The chain runs to 131 residues: Putative gene 51 protein (131 aa).

The protein is Putative gene 51 protein (51) of Bacillus phage SP01 (Bacteriophage SP01).